Reading from the N-terminus, the 141-residue chain is Lutropin subunit beta (141 aa).

The signal sequence occupies residues methionine 1 to alanine 20. 6 cysteine pairs are disulfide-bonded: cysteine 29–cysteine 77, cysteine 43–cysteine 92, cysteine 46–cysteine 130, cysteine 54–cysteine 108, cysteine 58–cysteine 110, and cysteine 113–cysteine 120. Residues asparagine 33 and asparagine 50 are each glycosylated (N-linked (GlcNAc...) asparagine).

The protein belongs to the glycoprotein hormones subunit beta family. In terms of assembly, heterodimer of a common alpha chain and a unique beta chain which confers biological specificity to thyrotropin, lutropin, follitropin and gonadotropin.

It is found in the secreted. Promotes spermatogenesis and ovulation by stimulating the testes and ovaries to synthesize steroids. In Gorilla gorilla gorilla (Western lowland gorilla), this protein is Lutropin subunit beta (LHB).